A 442-amino-acid chain; its full sequence is MSPSEAQQFLKENQVKYILAQFVDIHGSAKTKSVPAEHYKTVVTDGAGFAGFAIWGMGMTPNVDADYMAVGDASTLSLVPWQPGYARIACDGHTHGKPHEYDTRVVLKKQLEQITARGWTFFTGMEPEFSLLRKVEGKLLPADPGDTLSKPCYDYKGLSRARVFLERLSESLRSVGIDVYQIDHEDANGQFEINYTFTDALTSCDHYTFFKMGAAEIAAELGLICSFMPKPFSNRPGNGLHMHMSIGDGKRNLFEDKSDKHGLALSKLAYHWAAGLLKHAPALAALCCPTVNSYKRLVVGRSLTGATWAPAYICYGGNNRSGMIRSPGGRLELRLPDASCNAYLATAAVIAAGMDGVINELDPGAPQNDNLYEYSQAQLDAAGIKVLPQNLHEALLALEKDEVIRSALGPVVDEFLRLKHMEWVEYMRHVSDWEVNSYLEFF.

The region spanning 13-97 is the GS beta-grasp domain; it reads NQVKYILAQF…IACDGHTHGK (85 aa). Positions 103–442 constitute a GS catalytic domain; sequence TRVVLKKQLE…WEVNSYLEFF (340 aa).

Belongs to the glutamine synthetase family. Type 3 subfamily. Mg(2+) serves as cofactor.

It carries out the reaction methylamine + L-glutamate + ATP = N(5)-methyl-L-glutamine + ADP + phosphate + H(+). Its function is as follows. Catalyzes the formation of N(5)-methyl-L-glutamine from glutamate and methylamine. The sequence is that of Glutamate--methylamine ligase from Methyloversatilis universalis (strain ATCC BAA-1314 / DSM 25237 / JCM 13912 / CCUG 52030 / FAM5).